Here is a 232-residue protein sequence, read N- to C-terminus: Replicative helicase loading/DNA remodeling protein DnaD (232 aa).

Residues 1–98 (MKKQQFIDMQ…QNGIKFEKYS (98 aa)) form an N-terminal domain region. The segment at 1 to 116 (MKKQQFIDMQ…YEYIQLAQNQ (116 aa)) is DDBH1. The segment at 99 to 205 (LQPLWGKLYE…VEQAKIHSQK (107 aa)) is C-terminal domain. The tract at residues 131–200 (TIFEEEFARP…NGLKTVEQAK (70 aa)) is DDBH2. Positions 206–232 (FRRVQAKQNEPQKEYKRQVPFYNWLEQ) are C-terminal tail.

This sequence belongs to the DnaB/DnaD family. The DNA replisome assembles sequentially on oriC in this order; DnaA, DnaD, DnaB, DnaI-DnaC helicase. Homodimer. Homotetramer. Oligomerization in vitro is concentration dependent. Part of the replication restart primosome which assembles in this order; PriA, DnaD then DnaB. The preferred DNA substrate mimics an arrested DNA replication fork with unreplicated lagging strand. Interacts with DnaA, DnaB and PriA. Interaction with DnaB requires DnaD to dimerize.

It is found in the cytoplasm. With respect to regulation, recruitment to oriC requires DnaA but not DnaB, DnaC or DnaI and is blocked by SirA. In terms of biological role, required to load replicative helicase DnaC onto replication forks. Binds to a DnaD recognition element (DRE) which has pairs of 5'-TnnT-3' motifs; there is a strong DRE at oriC opposite the DnaA-trios recognized by DnaA. During DNA replication from the origin of replication (oriC) in the DNA replisome, DnaD is required after DnaA, before DnaB and subsequent helicase DnaC loading. A component of the replication restart primosome, which reloads the replicative helicase on sites other than oriC. DnaB, DnaD and DnaI may also be required for a PriA-independent pathway of replication fork restart. DnaB and DnaD work together to allow DnaB access to single-stranded (ss)DNA. Has DNA remodeling activity that converts supercoiled plasmid into an open circular form; DnaD forms scaffolds inside the plasmid DNA. Plasmid relaxation incorporates both wrapping around the DnaD protein scaffold and simultaneous untwisting, no nicking of the DNA is seen. Also converts linear DNA into an open circular form. Disrupts a replicative helicase-DnaI complex. Inhibits the ability of DnaA-ATP to form a helix on DNA; does not disassemble preformed helices in vitro. Binds ssDNA, and replication fork-like substrates, supercoiled plasmid, but not stably to short double-stranded (ds)DNA. DnaD stimulates DnaB DNA-binding activities. DnaB and DnaD are required to load helicase on the repN plasmid origin of replication (oriN). Causes a severe growth defect upon overexpression even in an oriC-independent strain. In Bacillus subtilis (strain 168), this protein is Replicative helicase loading/DNA remodeling protein DnaD.